The following is a 389-amino-acid chain: Homoserine O-acetyltransferase (389 aa).

The region spanning 63-371 (NAVLVLHALT…SSDYGHDGFL (309 aa)) is the AB hydrolase-1 domain. Ser-168 serves as the catalytic Nucleophile. Arg-240 contacts substrate. Residues Asp-334 and His-367 contribute to the active site. Asp-368 lines the substrate pocket.

Belongs to the AB hydrolase superfamily. MetX family. Homodimer.

Its subcellular location is the cytoplasm. The catalysed reaction is L-homoserine + acetyl-CoA = O-acetyl-L-homoserine + CoA. It participates in amino-acid biosynthesis; L-methionine biosynthesis via de novo pathway; O-acetyl-L-homoserine from L-homoserine: step 1/1. Its function is as follows. Transfers an acetyl group from acetyl-CoA to L-homoserine, forming acetyl-L-homoserine. The protein is Homoserine O-acetyltransferase of Clavibacter michiganensis subsp. michiganensis (strain NCPPB 382).